The following is a 377-amino-acid chain: Rhodopsin, long-wavelength (377 aa).

Residues 1-51 are Extracellular-facing; the sequence is MIAVSGPSYEAFSYGGQARFNNQTVVDKVPPDMLHLIDANWYQYPPLNPMW. Asn-22 carries an N-linked (GlcNAc...) asparagine glycan. Residues 52 to 76 traverse the membrane as a helical segment; sequence HGILGFVIGMLGFVSAMGNGMVVYI. Over 77 to 88 the chain is Cytoplasmic; it reads FLSTKSLRTPSN. Residues 89–113 traverse the membrane as a helical segment; that stretch reads LFVINLAISNFLMMFCMSPPMVINC. Residues 114 to 128 lie on the Extracellular side of the membrane; it reads YYETWVLGPLFCQIY. Cys-125 and Cys-202 are oxidised to a cystine. Residues 129–148 traverse the membrane as a helical segment; it reads AMLGSLFGCGSIWTMTMIAF. Residues 149-167 are Cytoplasmic-facing; it reads DRYNVIVKGLSGKPLSING. Residues 168–191 form a helical membrane-spanning segment; that stretch reads ALIRIIAIWLFSLGWTIAPMFGWN. Residues 192–215 are Extracellular-facing; sequence RYVPEGNMTACGTDYFNRGLLSAS. Asn-198 is a glycosylation site (N-linked (GlcNAc...) asparagine). Residues 216 to 243 traverse the membrane as a helical segment; that stretch reads YLVCYGIWVYFVPLFLIIYSYWFIIQAV. The Cytoplasmic portion of the chain corresponds to 244-278; the sequence is AAHEKNMREQAKKMNVASLRSSENQNTSAECKLAK. A helical transmembrane segment spans residues 279–302; sequence VALMTISLWFMAWTPYLVINFSGI. Residues 303–309 are Extracellular-facing; it reads FNLVKIS. A helical transmembrane segment spans residues 310–334; sequence PLFTIWGSLFAKANAVYNPIVYGIS. N6-(retinylidene)lysine is present on Lys-321. Residues 335 to 377 are Cytoplasmic-facing; sequence HPKYRAALFAKFPSLACAAEPSSDAVSTTSGTTTVTDNEKSNA. Over residues 357-370 the composition is skewed to low complexity; sequence SDAVSTTSGTTTVT. The interval 357–377 is disordered; sequence SDAVSTTSGTTTVTDNEKSNA.

It belongs to the G-protein coupled receptor 1 family. Opsin subfamily. Phosphorylated on some or all of the serine and threonine residues present in the C-terminal region.

The protein resides in the membrane. Visual pigments are the light-absorbing molecules that mediate vision. They consist of an apoprotein, opsin, covalently linked to 11-cis-retinal. In Apis mellifera (Honeybee), this protein is Rhodopsin, long-wavelength.